A 565-amino-acid chain; its full sequence is Cytokinin dehydrogenase 2 (565 aa).

The signal sequence occupies residues 1–20 (MKQEQVRMAVLLMLNCFVKA). An N-linked (GlcNAc...) asparagine glycan is attached at Asn64. One can recognise an FAD-binding PCMH-type domain in the interval 74–255 (RLAAAAAVLY…TRARIPLAPA (182 aa)). Ala108, Gly110, and Gly112 together coordinate FAD. Residue His113 is modified to Pros-8alpha-FAD histidine. Ser114, Gln118, Asp179, Thr184, Ser190, Ile194, and Ile245 together coordinate FAD. A glycan (N-linked (GlcNAc...) asparagine) is linked at Asn464. Tyr517, Ser554, and Gln557 together coordinate FAD.

Belongs to the oxygen-dependent FAD-linked oxidoreductase family. Monomer. FAD is required as a cofactor. In terms of processing, glycosylated. As to expression, mostly expressed in leaves, culms, inflorescence meristems, and flowers, especially in vascular tissues.

It is found in the secreted. It localises to the extracellular space. The catalysed reaction is N(6)-dimethylallyladenine + A + H2O = 3-methyl-2-butenal + adenine + AH2. In terms of biological role, catalyzes the oxidation of cytokinins, a family of N(6)-substituted adenine derivatives that are plant hormones, where the substituent is an isopentenyl group. Is a major QTL involved in grain yield. Modulates the number of reproductive organs by regulating the cytokinin accumulation in inflorescence meristems. Acts as negative regulator of panicle branching. This Oryza sativa subsp. japonica (Rice) protein is Cytokinin dehydrogenase 2.